Here is a 214-residue protein sequence, read N- to C-terminus: MVVKVYGQIKAANPQRVLLCFLEKDIEFEVIHVDLDKLEQKKPQHLLRQPFGQVPAIEDGYLKLFESRAIARYYATKYADQGTDLLGKTLEGRAIVDQWVEVENNYFYAVALPLVMNVVFKPKSGKPCDVALVEELKVKFDKVLDVYENRLATNRYLGGDEFTLADLSHMPGMRYIMNETSLSGLVTSRENLNRWWNEISARPAWKKLMELAAY.

The GST N-terminal domain maps to 2–82 (VVKVYGQIKA…YYATKYADQG (81 aa)). Glutathione-binding positions include 11 to 12 (AA), 40 to 41 (QK), 53 to 54 (QV), and 66 to 67 (ES). Positions 89–214 (TLEGRAIVDQ…WKKLMELAAY (126 aa)) constitute a GST C-terminal domain.

This sequence belongs to the GST superfamily. Phi family.

It is found in the cytoplasm. Its subcellular location is the cytosol. The catalysed reaction is RX + glutathione = an S-substituted glutathione + a halide anion + H(+). Functionally, may be involved in the conjugation of reduced glutathione to a wide number of exogenous and endogenous hydrophobic electrophiles and have a detoxification role against certain herbicides. In Arabidopsis thaliana (Mouse-ear cress), this protein is Glutathione S-transferase F11.